The following is a 1222-amino-acid chain: Serine/threonine-protein kinase WNK4 (1222 aa).

Polar residues predominate over residues 1 to 17; the sequence is MLAPRNTETGVHMSQTE. The tract at residues 1–163 is disordered; it reads MLAPRNTETG…KEDTETQAVA (163 aa). Phosphoserine is present on S95. Positions 135–152 are enriched in basic and acidic residues; it reads EPPRVPDAAARERRREQE. Residues K154 and K172 each participate in a glycyl lysine isopeptide (Lys-Gly) (interchain with G-Cter in ubiquitin) cross-link. A Protein kinase domain is found at 171 to 429; that stretch reads LKFDIEIGRG…IQDLLTHAFF (259 aa). Position 181 (S181) interacts with ATP. Glycyl lysine isopeptide (Lys-Gly) (interchain with G-Cter in ubiquitin) cross-links involve residues K183, K223, and K238. Residues 251–254 and K301 each bind ATP; that span reads TELM. Residue D318 is the Proton acceptor of the active site. A Glycyl lysine isopeptide (Lys-Gly) (interchain with G-Cter in ubiquitin) cross-link involves residue K325. Residues S328 and S332 each carry the phosphoserine; by autocatalysis modification. Glycyl lysine isopeptide (Lys-Gly) (interchain with G-Cter in ubiquitin) cross-links involve residues K384, K390, K447, and K451. Residues 527 to 562 are disordered; the sequence is LEVLPPDSGPPPATVSMTPGPPSAFPPEPEEPEADQ. A compositionally biased stretch (pro residues) spans 533 to 553; the sequence is DSGPPPATVSMTPGPPSAFPP. The tract at residues 554 to 564 is interaction with KLHL3; it reads EPEEPEADQHQ. A Phosphoserine modification is found at S572. 5 disordered regions span residues 591-612, 626-679, 747-809, 836-873, and 927-1087; these read FLDA…PAEP, RSGP…SVSD, DAGP…GTPF, QVSS…SPLP, and SPGL…QPSP. A compositionally biased stretch (low complexity) spans 627–638; the sequence is SGPGSDFSPGDS. The span at 659-672 shows a compositional bias: basic residues; sequence NPVKTLRRRPRSRL. Low complexity-rich tracts occupy residues 792–809 and 845–873; these read FSTS…GTPF and APSS…SPLP. Pro residues predominate over residues 935–946; that stretch reads PPAPPGPLPSMP. Polar residues predominate over residues 953–963; sequence DQESLSAQTAE. A Glycyl lysine isopeptide (Lys-Gly) (interchain with G-Cter in ubiquitin) cross-link involves residue K990. The RFXV motif signature appears at 996–999; it reads RFQV. S1014 carries the post-translational modification Phosphoserine. The segment covering 1044 to 1056 has biased composition (basic and acidic residues); it reads ETREALAESDRAA. Residues 1076–1086 are compositionally biased toward polar residues; it reads GGSSPILSQPS. Glycyl lysine isopeptide (Lys-Gly) (interchain with G-Cter in ubiquitin) cross-links involve residues K1123, K1136, and K1137. Residues 1169 to 1222 form a disordered region; sequence SKGSFPTSRRNSLQRSDLPGPGIMRRNSLSGSSTGSQEQRASKGVTFAGDVGRM. Composition is skewed to polar residues over residues 1172–1183 and 1195–1207; these read SFPTSRRNSLQR and NSLS…SQEQ. Phosphoserine is present on S1196.

This sequence belongs to the protein kinase superfamily. Ser/Thr protein kinase family. WNK subfamily. Interacts with the C-terminal region of KCNJ1. Interacts with WNK1 and WNK3. Interacts with KLHL3. Requires Mg(2+) as cofactor. In terms of processing, autophosphorylated at Ser-328 and Ser-332, promoting its activation. Phosphorylated by WNK1 and WNK3. Phosphorylated at Ser-572 in a MAP3K15/ASK3-dependent process in response to osmotic stress or hypotonic low-chloride stimulation. Post-translationally, ubiquitinated by the BCR(KLHL3) complex, leading to its degradation. Also ubiquitinated by the BCR(KLHL2) complex.

It localises to the cell junction. The protein resides in the tight junction. The enzyme catalyses L-seryl-[protein] + ATP = O-phospho-L-seryl-[protein] + ADP + H(+). It carries out the reaction L-threonyl-[protein] + ATP = O-phospho-L-threonyl-[protein] + ADP + H(+). Its activity is regulated as follows. Activation requires autophosphorylation of Ser-328 and Ser-332. Autophosphorylation and subsequent activation is inhibited by increases in intracellular ionic strength: Cl(-) potently inhibits WNK4 kinase activity via direct binding. Also inhibited by K(+) ions. Its function is as follows. Serine/threonine-protein kinase component of the WNK4-SPAK/OSR1 kinase cascade, which acts as a key regulator of ion transport in the distal nephron and blood pressure. The WNK4-SPAK/OSR1 kinase cascade is composed of WNK4, which mediates phosphorylation and activation of downstream kinases OXSR1/OSR1 and STK39/SPAK. Following activation, OXSR1/OSR1 and STK39/SPAK catalyze phosphorylation of ion cotransporters, such as SLC12A1/NKCC2, SLC12A2/NKCC1, SLC12A3/NCC, SLC12A5/KCC2 or SLC12A6/KCC3, regulating their activity. Acts as a molecular switch that regulates the balance between renal salt reabsorption and K(+) secretion by modulating the activities of renal transporters and channels, including the Na-Cl cotransporter SLC12A3/NCC and the K(+) channel, KCNJ1/ROMK. Regulates NaCl reabsorption in the distal nephron by activating the thiazide-sensitive Na-Cl cotransporter SLC12A3/NCC in distal convoluted tubule cells of kidney: activates SLC12A3/NCC in a OXSR1/OSR1- and STK39/SPAK-dependent process. Also acts as a scaffold protein independently of its protein kinase activity: negatively regulates cell membrane localization of various transporters and channels (CFTR, KCNJ1/ROMK, SLC4A4, SLC26A9 and TRPV4) by clathrin-dependent endocytosis. Also inhibits the activity of the epithelial Na(+) channel (ENaC) SCNN1A, SCNN1B, SCNN1D in a inase-independent mechanism. May also phosphorylate NEDD4L. This chain is Serine/threonine-protein kinase WNK4, found in Rattus norvegicus (Rat).